Reading from the N-terminus, the 196-residue chain is 3-isopropylmalate dehydratase small subunit (196 aa).

Belongs to the LeuD family. LeuD type 1 subfamily. In terms of assembly, heterodimer of LeuC and LeuD.

The enzyme catalyses (2R,3S)-3-isopropylmalate = (2S)-2-isopropylmalate. It participates in amino-acid biosynthesis; L-leucine biosynthesis; L-leucine from 3-methyl-2-oxobutanoate: step 2/4. Catalyzes the isomerization between 2-isopropylmalate and 3-isopropylmalate, via the formation of 2-isopropylmaleate. The protein is 3-isopropylmalate dehydratase small subunit of Corynebacterium efficiens (strain DSM 44549 / YS-314 / AJ 12310 / JCM 11189 / NBRC 100395).